The primary structure comprises 754 residues: Gelsolin, cytoplasmic (754 aa).

The segment at 1–120 (MVPAFEGAGA…RYLKGGVASG (120 aa)) is actin-severing. The stretch at 22–71 (FEVVPYPKEKYGQFYQGDSYIVLYTRDVNGNLSWDLHFWLGSETSQDEAG) is one Gelsolin-like 1 repeat. Residues 68 to 71 (DEAG) form an actin-actin interfilament contact point region. A 1,2-diacyl-sn-glycero-3-phospho-(1D-myo-inositol-4,5-bisphosphate) contacts are provided by residues 101–108 (LFLSRFKK) and 133–141 (RLFHVKGRR). Residues 143–183 (IRIRQVEVGVGSMNKGDCFILDCGSQVYAYMGPSSRKMDRL) form a Gelsolin-like 2 repeat. Positions 209-238 (TASGSEAGESSPGLGGGSPDDVADEDTGVD) are disordered. A compositionally biased stretch (low complexity) spans 210-220 (ASGSEAGESSP). Gelsolin-like repeat units lie at residues 266–306 (NMIG…KEKV), 414–463 (LKLE…DEKA), 538–580 (FDTR…EEKA), and 643–684 (LRVN…QEKE). The segment at 386–751 (LLQKNAGPAF…MKAQVPETNA (366 aa)) is actin-binding, Ca-sensitive. Ca(2+) contacts are provided by Gly430, Asp431, Glu461, Asp556, Glu578, Asp659, Asp660, and Glu682.

This sequence belongs to the villin/gelsolin family. As to expression, tail muscle.

Its subcellular location is the cytoplasm. It localises to the cytoskeleton. Calcium-regulated, actin-modulating protein that binds to the plus (or barbed) ends of actin monomers or filaments, preventing monomer exchange (end-blocking or capping). It can promote the assembly of monomers into filaments (nucleation) as well as sever filaments already formed. This chain is Gelsolin, cytoplasmic, found in Homarus americanus (American lobster).